Consider the following 234-residue polypeptide: Sugar fermentation stimulation protein A (234 aa).

The H-T-H motif DNA-binding region spans 201–220 (LLSEAQQRGVEILAYKAEIS).

It belongs to the SfsA family.

Functionally, binds to DNA non-specifically. Could be a regulatory factor involved in maltose metabolism. In Shigella flexneri, this protein is Sugar fermentation stimulation protein A.